The chain runs to 197 residues: Holliday junction branch migration complex subunit RuvA (197 aa).

A domain I region spans residues methionine 1 to arginine 63. Positions serine 64–valine 142 are domain II. The tract at residues alanine 143–serine 147 is flexible linker. Residues alanine 148–lysine 197 are domain III.

Belongs to the RuvA family. Homotetramer. Forms an RuvA(8)-RuvB(12)-Holliday junction (HJ) complex. HJ DNA is sandwiched between 2 RuvA tetramers; dsDNA enters through RuvA and exits via RuvB. An RuvB hexamer assembles on each DNA strand where it exits the tetramer. Each RuvB hexamer is contacted by two RuvA subunits (via domain III) on 2 adjacent RuvB subunits; this complex drives branch migration. In the full resolvosome a probable DNA-RuvA(4)-RuvB(12)-RuvC(2) complex forms which resolves the HJ.

It localises to the cytoplasm. Functionally, the RuvA-RuvB-RuvC complex processes Holliday junction (HJ) DNA during genetic recombination and DNA repair, while the RuvA-RuvB complex plays an important role in the rescue of blocked DNA replication forks via replication fork reversal (RFR). RuvA specifically binds to HJ cruciform DNA, conferring on it an open structure. The RuvB hexamer acts as an ATP-dependent pump, pulling dsDNA into and through the RuvAB complex. HJ branch migration allows RuvC to scan DNA until it finds its consensus sequence, where it cleaves and resolves the cruciform DNA. The chain is Holliday junction branch migration complex subunit RuvA from Streptococcus pneumoniae serotype 2 (strain D39 / NCTC 7466).